Consider the following 553-residue polypeptide: Undecaprenyl phosphate-alpha-4-amino-4-deoxy-L-arabinose arabinosyl transferase 2 (553 aa).

The next 12 membrane-spanning stretches (helical) occupy residues 6–26, 85–105, 115–135, 137–157, 178–198, 208–228, 261–281, 295–315, 317–337, 352–372, 386–406, and 410–430; these read ASKI…LFPL, FAVR…IYLL, VAFV…VGTY, VLDP…FWAL, MAFM…MIPV, MLLY…PWVL, FWYY…LLPG, ELFF…IAKG, LPTY…KYGV, GYIN…IQLV, WVLA…CSTL, and HWLW…QAIP.

Belongs to the glycosyltransferase 83 family.

Its subcellular location is the cell inner membrane. It carries out the reaction 4-amino-4-deoxy-alpha-L-arabinopyranosyl di-trans,octa-cis-undecaprenyl phosphate + lipid IVA = lipid IIA + di-trans,octa-cis-undecaprenyl phosphate.. It functions in the pathway lipopolysaccharide metabolism; 4-amino-4-deoxy-beta-L-arabinose-lipid A biosynthesis. Functionally, catalyzes the transfer of the L-Ara4N moiety of the glycolipid undecaprenyl phosphate-alpha-L-Ara4N to lipid A. The modified arabinose is attached to lipid A and is required for resistance to polymyxin and cationic antimicrobial peptides. This Proteus mirabilis (strain HI4320) protein is Undecaprenyl phosphate-alpha-4-amino-4-deoxy-L-arabinose arabinosyl transferase 2.